A 261-amino-acid polypeptide reads, in one-letter code: uncharacterized protein (261 aa).

It belongs to the BtpA family.

This is an uncharacterized protein from Thermococcus kodakarensis (strain ATCC BAA-918 / JCM 12380 / KOD1) (Pyrococcus kodakaraensis (strain KOD1)).